The sequence spans 27 residues: Bombinin-like peptide 2 (27 aa).

Asn-27 carries the post-translational modification Asparagine amide.

This sequence belongs to the bombinin family. Expressed by the skin glands.

Its subcellular location is the secreted. In terms of biological role, has antimicrobial activity, but no hemolytic activity. Preference on killing Gram-negative non-enteric bacteria. The protein is Bombinin-like peptide 2 of Bombina orientalis (Oriental fire-bellied toad).